Here is a 351-residue protein sequence, read N- to C-terminus: Heat-inducible transcription repressor HrcA (351 aa).

It belongs to the HrcA family.

Its function is as follows. Negative regulator of class I heat shock genes (grpE-dnaK-dnaJ and groELS operons). Prevents heat-shock induction of these operons. In Clostridium tetani (strain Massachusetts / E88), this protein is Heat-inducible transcription repressor HrcA.